A 112-amino-acid polypeptide reads, in one-letter code: MAEDIEEIRKRKLMELQKRYLEQQKAQEEAIKREMELQAQIDAIMRKILTPDARERLGRVKLVKPELARQVELVLVQLYQAGQIREPIDDAKLKKILAQIDARTRREFRIKW.

This sequence belongs to the PDCD5 family.

In Thermococcus gammatolerans (strain DSM 15229 / JCM 11827 / EJ3), this protein is DNA-binding protein TGAM_1196.